The sequence spans 302 residues: D-alanine--D-alanine ligase (302 aa).

In terms of domain architecture, ATP-grasp spans lysine 100 to glutamate 295. Glutamine 126–threonine 180 contacts ATP. Positions 250, 262, and 264 each coordinate Mg(2+).

This sequence belongs to the D-alanine--D-alanine ligase family. Mg(2+) serves as cofactor. It depends on Mn(2+) as a cofactor.

The protein resides in the cytoplasm. The catalysed reaction is 2 D-alanine + ATP = D-alanyl-D-alanine + ADP + phosphate + H(+). Its pathway is cell wall biogenesis; peptidoglycan biosynthesis. Cell wall formation. This is D-alanine--D-alanine ligase from Maridesulfovibrio salexigens (strain ATCC 14822 / DSM 2638 / NCIMB 8403 / VKM B-1763) (Desulfovibrio salexigens).